The sequence spans 40 residues: U12-ctenitoxin-Co1a (40 aa).

Intrachain disulfides connect Cys2–Cys16, Cys9–Cys22, Cys15–Cys31, and Cys24–Cys29.

As to expression, expressed by the venom gland.

Its subcellular location is the secreted. Functionally, insecticidal neurotoxin that reversibly inhibits the N-methyl-D-aspartate (NMDA)-subtype of ionotropic glutamate receptor (GRIN) and inhibits inactivation of insect sodium channels (Nav). In vivo, is highly toxic to insects. The polypeptide is U12-ctenitoxin-Co1a (Ctenus ornatus (Brazilian spider)).